A 633-amino-acid chain; its full sequence is Opioid growth factor receptor (633 aa).

Residue methionine 1 is modified to N-acetylmethionine. Residues 1–38 show a composition bias toward acidic residues; sequence MDDPECDSTWEDESEEDGEDGQADDTTDEDTGDDDGDA. The interval 1–44 is disordered; it reads MDDPECDSTWEDESEEDGEDGQADDTTDEDTGDDDGDAEEARPS. Residues 257–286 carry the Bipartite nuclear localization signal motif; that stretch reads RRELVHFAWEHFKPRREFVWGPRDKLRRFR. The disordered stretch occupies residues 287–390; sequence PQTISRPLMG…EPDPQGVSEV (104 aa). A phosphoserine mark is found at serine 327, serine 340, serine 361, serine 365, serine 403, and serine 452. Over residues 351–374 the composition is skewed to basic and acidic residues; sequence GDQRHEAKSPSPKESKKRKLEGNR. Residues 404–633 are disordered; sequence PTSQEPREAE…IEASVEPPKP (230 aa). A compositionally biased stretch (polar residues) spans 441 to 455; it reads ASNTQVQASALSPTP. 14 tandem repeats follow at residues 467 to 475, 476 to 484, 485 to 493, 494 to 502, 503 to 511, 512 to 520, 521 to 529, 530 to 538, 539 to 547, 548 to 556, 557 to 565, 566 to 574, 575 to 583, and 584 to 592. The tract at residues 467-592 is 14 X approximate tandem repeats; that stretch reads GPEDPKSQVG…VGPEDPQSQV (126 aa). Basic and acidic residues predominate over residues 505–517; it reads EDPKGQVEPEDPK. Positions 550 to 580 are enriched in basic and acidic residues; sequence EDPKSQVEPEDPKSQVEPEDPKSQVEPEDPK. Phosphoserine is present on residues serine 601 and serine 608.

This sequence belongs to the opioid growth factor receptor family. As to expression, expressed in all tissues examined, including brain, heart, lung, liver, kidney and skeletal muscle.

Its subcellular location is the cytoplasm. It is found in the nucleus. Functionally, receptor for opioid growth factor (OGF), also known as Met-enkephalin. Seems to be involved in growth regulation. The protein is Opioid growth factor receptor (Ogfr) of Mus musculus (Mouse).